The chain runs to 472 residues: Ribosomal protein uS12 methylthiotransferase RimO (472 aa).

The MTTase N-terminal domain maps to 33-143 (NRIGFVSLGC…VLKHVHKYVP (111 aa)). Positions 42, 78, 107, 175, 179, and 182 each coordinate [4Fe-4S] cluster. One can recognise a Radical SAM core domain in the interval 161 to 398 (LTPKHYAYLK…MELQAEISAE (238 aa)). Positions 401 to 467 (ARFVGRTLDI…EHDLWAEVVD (67 aa)) constitute a TRAM domain.

It belongs to the methylthiotransferase family. RimO subfamily. Requires [4Fe-4S] cluster as cofactor.

The protein localises to the cytoplasm. It catalyses the reaction L-aspartate(89)-[ribosomal protein uS12]-hydrogen + (sulfur carrier)-SH + AH2 + 2 S-adenosyl-L-methionine = 3-methylsulfanyl-L-aspartate(89)-[ribosomal protein uS12]-hydrogen + (sulfur carrier)-H + 5'-deoxyadenosine + L-methionine + A + S-adenosyl-L-homocysteine + 2 H(+). Catalyzes the methylthiolation of an aspartic acid residue of ribosomal protein uS12. This is Ribosomal protein uS12 methylthiotransferase RimO from Shewanella sp. (strain W3-18-1).